The following is a 473-amino-acid chain: ATP synthase subunit beta (473 aa).

153-160 contacts ATP; sequence GGAGVGKT.

It belongs to the ATPase alpha/beta chains family. F-type ATPases have 2 components, CF(1) - the catalytic core - and CF(0) - the membrane proton channel. CF(1) has five subunits: alpha(3), beta(3), gamma(1), delta(1), epsilon(1). CF(0) has three main subunits: a(1), b(2) and c(9-12). The alpha and beta chains form an alternating ring which encloses part of the gamma chain. CF(1) is attached to CF(0) by a central stalk formed by the gamma and epsilon chains, while a peripheral stalk is formed by the delta and b chains.

It is found in the cell inner membrane. It catalyses the reaction ATP + H2O + 4 H(+)(in) = ADP + phosphate + 5 H(+)(out). In terms of biological role, produces ATP from ADP in the presence of a proton gradient across the membrane. The catalytic sites are hosted primarily by the beta subunits. This Rickettsia bellii (strain RML369-C) protein is ATP synthase subunit beta.